The sequence spans 449 residues: Dolichyl-diphosphooligosaccharide--protein glycosyltransferase 48 kDa subunit (449 aa).

A signal peptide spans 1 to 18 (MMWKALLIAVLAIAHCQA). Over 19-412 (VLETDANTLV…ERFIPSAFPY (394 aa)) the chain is Lumenal. The chain crosses the membrane as a helical span at residues 413 to 433 (YTSAFSMMIGVFVFSFVFLHF). Topologically, residues 434 to 449 (KDEPVGRAAKEDKKSQ) are cytoplasmic.

This sequence belongs to the DDOST 48 kDa subunit family. In terms of assembly, component of the oligosaccharyltransferase (OST) complex.

The protein localises to the endoplasmic reticulum membrane. Its pathway is protein modification; protein glycosylation. Functionally, subunit of the oligosaccharyl transferase (OST) complex that catalyzes the initial transfer of a defined glycan (Glc(3)Man(9)GlcNAc(2) in eukaryotes) from the lipid carrier dolichol-pyrophosphate to an asparagine residue within an Asn-X-Ser/Thr consensus motif in nascent polypeptide chains, the first step in protein N-glycosylation. N-glycosylation occurs cotranslationally and the complex associates with the Sec61 complex at the channel-forming translocon complex that mediates protein translocation across the endoplasmic reticulum (ER). All subunits are required for a maximal enzyme activity. Required for the assembly of both SST3A- and SS3B-containing OST complexes. The protein is Dolichyl-diphosphooligosaccharide--protein glycosyltransferase 48 kDa subunit (Ost48) of Drosophila melanogaster (Fruit fly).